A 1441-amino-acid chain; its full sequence is Probable ubiquitin-conjugating enzyme E2 R521 (1441 aa).

Residues 20–40 (YIHHIIINYITNSILYFFLIM) traverse the membrane as a helical segment. Positions 63–89 (NQSKLVNTLDIIKDEINKWEEKNTDKD) form a coiled coil. The segment covering 180-199 (VSKDKMKDKSESNSEHEQES) has biased composition (basic and acidic residues). Disordered regions lie at residues 180-207 (VSKDKMKDKSESNSEHEQESKSVVSNEI) and 283-305 (IFGKSKNSGPSSSKTSISSMSKV). Residues 286–303 (KSKNSGPSSSKTSISSMS) are compositionally biased toward low complexity. Residues 340-368 (TTNEDNNDLDNLINEVERLVQETKDQETK) adopt a coiled-coil conformation. Residues 505 to 538 (TVEPVQEVAEEPVQQEVAEEPVQQEVAEEPVQQE) show a composition bias toward low complexity. 2 disordered regions span residues 505 to 554 (TVEP…PVQK) and 577 to 605 (NDFSDHSDSPEPSDSSDSEEEITNSNNLG). A compositionally biased stretch (acidic residues) spans 539–549 (VAEEPVQEVAE). Positions 1217 to 1380 (AISRELLSHS…VRFNCMKWAM (164 aa)) constitute a UBC core domain. Cys-1306 acts as the Glycyl thioester intermediate in catalysis.

This sequence belongs to the ubiquitin-conjugating enzyme family.

It is found in the membrane. The enzyme catalyses S-ubiquitinyl-[E1 ubiquitin-activating enzyme]-L-cysteine + [E2 ubiquitin-conjugating enzyme]-L-cysteine = [E1 ubiquitin-activating enzyme]-L-cysteine + S-ubiquitinyl-[E2 ubiquitin-conjugating enzyme]-L-cysteine.. Its pathway is protein modification; protein ubiquitination. In terms of biological role, catalyzes the covalent attachment of ubiquitin to other proteins. The sequence is that of Probable ubiquitin-conjugating enzyme E2 R521 from Acanthamoeba polyphaga (Amoeba).